A 378-amino-acid chain; its full sequence is 4-hydroxy-3-methylbut-2-en-1-yl diphosphate synthase (flavodoxin) (378 aa).

Residues Cys-268, Cys-271, Cys-303, and Glu-310 each contribute to the [4Fe-4S] cluster site.

It belongs to the IspG family. The cofactor is [4Fe-4S] cluster.

It catalyses the reaction (2E)-4-hydroxy-3-methylbut-2-enyl diphosphate + oxidized [flavodoxin] + H2O + 2 H(+) = 2-C-methyl-D-erythritol 2,4-cyclic diphosphate + reduced [flavodoxin]. It participates in isoprenoid biosynthesis; isopentenyl diphosphate biosynthesis via DXP pathway; isopentenyl diphosphate from 1-deoxy-D-xylulose 5-phosphate: step 5/6. Converts 2C-methyl-D-erythritol 2,4-cyclodiphosphate (ME-2,4cPP) into 1-hydroxy-2-methyl-2-(E)-butenyl 4-diphosphate. The protein is 4-hydroxy-3-methylbut-2-en-1-yl diphosphate synthase (flavodoxin) of Corynebacterium efficiens (strain DSM 44549 / YS-314 / AJ 12310 / JCM 11189 / NBRC 100395).